The sequence spans 489 residues: Glutamyl-tRNA(Gln) amidotransferase subunit A (489 aa).

Residues lysine 79 and serine 158 each act as charge relay system in the active site. Serine 182 functions as the Acyl-ester intermediate in the catalytic mechanism.

It belongs to the amidase family. GatA subfamily. Heterotrimer of A, B and C subunits.

It carries out the reaction L-glutamyl-tRNA(Gln) + L-glutamine + ATP + H2O = L-glutaminyl-tRNA(Gln) + L-glutamate + ADP + phosphate + H(+). In terms of biological role, allows the formation of correctly charged Gln-tRNA(Gln) through the transamidation of misacylated Glu-tRNA(Gln) in organisms which lack glutaminyl-tRNA synthetase. The reaction takes place in the presence of glutamine and ATP through an activated gamma-phospho-Glu-tRNA(Gln). This is Glutamyl-tRNA(Gln) amidotransferase subunit A from Anaplasma marginale (strain Florida).